Reading from the N-terminus, the 286-residue chain is Tungstate-binding protein TupA (286 aa).

Residues 1 to 20 (MKRLLSIITAVMMLALALTG) form the signal peptide. Residue C21 is the site of N-palmitoyl cysteine attachment. A lipid anchor (S-diacylglycerol cysteine) is attached at C21.

In terms of assembly, monomer. The complex is composed of two ATP-binding proteins (TupC), two transmembrane proteins (TupB) and a solute-binding protein (TupA).

The protein localises to the cell membrane. Functionally, part of an ABC transporter complex involved in tungstate uptake. Specifically binds tungstate. This Peptoclostridium acidaminophilum (Eubacterium acidaminophilum) protein is Tungstate-binding protein TupA.